The chain runs to 399 residues: Carbamoyl phosphate synthase small chain (399 aa).

The interval 1–209 is CPSase; that stretch reads MEKFKLLKLG…SAINKKLHTS (209 aa). Residues Ser-55, Gly-261, and Gly-263 each contribute to the L-glutamine site. A Glutamine amidotransferase type-1 domain is found at 213–399; the sequence is RIIVLDLGVK…VYIIYKSKSS (187 aa). Cys-289 functions as the Nucleophile in the catalytic mechanism. The L-glutamine site is built by Leu-290, Gln-293, Asn-329, Gly-331, and Phe-332. Catalysis depends on residues His-372 and Glu-374.

This sequence belongs to the CarA family. Composed of two chains; the small (or glutamine) chain promotes the hydrolysis of glutamine to ammonia, which is used by the large (or ammonia) chain to synthesize carbamoyl phosphate. Tetramer of heterodimers (alpha,beta)4.

It is found in the plastid. The protein localises to the chloroplast. The enzyme catalyses hydrogencarbonate + L-glutamine + 2 ATP + H2O = carbamoyl phosphate + L-glutamate + 2 ADP + phosphate + 2 H(+). It carries out the reaction L-glutamine + H2O = L-glutamate + NH4(+). The protein operates within amino-acid biosynthesis; L-arginine biosynthesis; carbamoyl phosphate from bicarbonate: step 1/1. It participates in pyrimidine metabolism; UMP biosynthesis via de novo pathway; (S)-dihydroorotate from bicarbonate: step 1/3. Its function is as follows. Small subunit of the glutamine-dependent carbamoyl phosphate synthetase (CPSase). CPSase catalyzes the formation of carbamoyl phosphate from the ammonia moiety of glutamine, carbonate, and phosphate donated by ATP, constituting the first step of 2 biosynthetic pathways, one leading to arginine and/or urea and the other to pyrimidine nucleotides. The small subunit (glutamine amidotransferase) binds and cleaves glutamine to supply the large subunit with the substrate ammonia. The chain is Carbamoyl phosphate synthase small chain from Cyanidium caldarium (Red alga).